A 578-amino-acid polypeptide reads, in one-letter code: Probable arginine--tRNA ligase, mitochondrial (578 aa).

The transit peptide at 1–16 (MACGFRRAIACQLSRV) directs the protein to the mitochondrion. Residues 133–135 (SPN), His-144, Tyr-322, Asp-326, and Gln-350 each bind L-arginine. Residues 133–144 (SPNVAKKFHVGH) carry the 'HIGH' region motif. Position 568 is an N6-acetyllysine (Lys-568).

Belongs to the class-I aminoacyl-tRNA synthetase family.

The protein localises to the mitochondrion membrane. The catalysed reaction is tRNA(Arg) + L-arginine + ATP = L-arginyl-tRNA(Arg) + AMP + diphosphate. Functionally, catalyzes the attachment of arginine to tRNA(Arg) in a two-step reaction: arginine is first activated by ATP to form Arg-AMP and then transferred to the acceptor end of tRNA(Arg). This is Probable arginine--tRNA ligase, mitochondrial (RARS2) from Homo sapiens (Human).